The primary structure comprises 826 residues: Villin-1 (826 aa).

The segment at 1–734 (MVELSKKVTG…YDELKAELGD (734 aa)) is core. The stretch at 27–76 (MEMVPVPTKSYGNFYEGDCYVLLSTRKTGSGFSYNIHYWLGKNSSQDEQG) is one Gelsolin-like 1 repeat. Residue 112-119 (KQGLIYKQ) participates in a 1,2-diacyl-sn-glycero-3-phospho-(1D-myo-inositol-4,5-bisphosphate) binding. Residues 129-137 (VETNTYNVQ) are crucial for binding an actin filament. 138-146 (RLLHVKGKK) serves as a coordination point for a 1,2-diacyl-sn-glycero-3-phospho-(1D-myo-inositol-4,5-bisphosphate). Gelsolin-like repeat units lie at residues 148–188 (VVAA…AERL), 265–309 (LVIQ…EEKQ), 408–457 (QELV…DELA), 528–568 (TKAF…DERE), and 631–672 (FLAT…SEKE). The tract at residues 735-826 (NASIGQLVSG…QNLKKEKGLF (92 aa)) is headpiece. One can recognise an HP domain in the interval 760 to 826 (PTKLETFPLD…QNLKKEKGLF (67 aa)). Residues 820–823 (KKEK) are absolutely required for activity.

Belongs to the villin/gelsolin family. Monomer. Homodimer. Associates with F-actin; the association with F-actin is inhibited by tropomyosin. In terms of processing, phosphorylated on tyrosine residues. The unphosphorylated form increases the initial rate of actin-nucleating activity, whereas the tyrosine-phosphorylated form inhibits actin-nucleating activity, enhances actin-bundling activity and enhances actin-severing activity by reducing high Ca(2+) requirements. The tyrosine-phosphorylated form does not regulate actin-capping activity. Tyrosine phosphorylation is essential for cell migration: tyrosine phosphorylation sites in the N-terminus half regulate actin reorganization and cell morphology, whereas tyrosine phosphorylation sites in the C-terminus half regulate cell migration. Tyrosine phosphorylation is induced by epidermal growth factor (EGF) and stimulates cell migration. As to expression, specifically expressed in epithelial cells. Component of brush border microvilli.

The protein localises to the cytoplasm. Its subcellular location is the cytoskeleton. It is found in the cell projection. It localises to the microvillus. The protein resides in the lamellipodium. The protein localises to the ruffle. Its subcellular location is the filopodium tip. It is found in the filopodium. Functionally, epithelial cell-specific Ca(2+)-regulated actin-modifying protein that modulates the reorganization of microvillar actin filaments. Plays a role in the actin nucleation, actin filament bundle assembly, actin filament capping and severing. Binds phosphatidylinositol 4,5-bisphosphate (PIP2) and lysophosphatidic acid (LPA); binds LPA with higher affinity than PIP2. Binding to LPA increases its phosphorylation by SRC and inhibits all actin-modifying activities. Binding to PIP2 inhibits actin-capping and -severing activities but enhances actin-bundling activity. Regulates the intestinal epithelial cell morphology, cell invasion, cell migration and apoptosis. Protects against apoptosis induced by dextran sodium sulfate (DSS) in the gastrointestinal epithelium. Appears to regulate cell death by maintaining mitochondrial integrity. Enhances hepatocyte growth factor (HGF)-induced epithelial cell motility, chemotaxis and wound repair. Its actin-bundling activity is inhibited by tropomyosin. The chain is Villin-1 (VIL1) from Gallus gallus (Chicken).